A 158-amino-acid polypeptide reads, in one-letter code: Putative ribonucleoside-diphosphate reductase small chain B (158 aa).

It belongs to the ribonucleoside diphosphate reductase small chain family.

This is Putative ribonucleoside-diphosphate reductase small chain B (RNR2B) from Arabidopsis thaliana (Mouse-ear cress).